The chain runs to 276 residues: uncharacterized protein (276 aa).

Position 15-22 (Gly-15–Ser-22) interacts with ATP. 2 4Fe-4S ferredoxin-type domains span residues Glu-68–Ile-96 and Gly-92–Arg-121. Residues Cys-76, Cys-79, Cys-82, Cys-86, Cys-101, Cys-104, Cys-107, and Cys-111 each coordinate [4Fe-4S] cluster.

This is an uncharacterized protein from Methanocaldococcus jannaschii (strain ATCC 43067 / DSM 2661 / JAL-1 / JCM 10045 / NBRC 100440) (Methanococcus jannaschii).